The primary structure comprises 38 residues: Large ribosomal subunit protein bL36 (38 aa).

Belongs to the bacterial ribosomal protein bL36 family.

This is Large ribosomal subunit protein bL36 from Phytoplasma australiense.